The sequence spans 430 residues: Probable proton-coupled zinc antiporter SLC30A4 (430 aa).

Topologically, residues 1-113 (MAGPGAWKRL…LLKQRKVKTR (113 aa)) are cytoplasmic. Serine 36 is modified (phosphoserine). Residues 114 to 134 (LTIAAVLYLLFMIGELVGGYM) traverse the membrane as a helical segment. The Lumenal segment spans residues 135–143 (ANSLAIMTD). The helical transmembrane segment at 144–164 (ALHMLTDLSAIILTLLALWLS) threads the bilayer. Zn(2+) is bound by residues histidine 146 and aspartate 150. Over 165 to 178 (SKSPTRRFTFGFHR) the chain is Cytoplasmic. A helical membrane pass occupies residues 179-199 (LEVLSAMISVMLVYVLMGFLL). Residues 200-216 (YEAVQRTIHMNYEINGD) lie on the Lumenal side of the membrane. The helical transmembrane segment at 217 to 237 (VMLITAAVGVAVNVIMGFLLN) threads the bilayer. At 238 to 275 (QSGHHHSHAHSHSLPSNSPSMVSSGHNHGQDSLAVRAA) the chain is on the cytoplasmic side. Residues 240–265 (GHHHSHAHSHSLPSNSPSMVSSGHNH) are zinc binding. Residues 245–264 (HAHSHSLPSNSPSMVSSGHN) are disordered. The segment covering 249 to 263 (HSLPSNSPSMVSSGH) has biased composition (low complexity). Residues 276–296 (FVHALGDLVQSVGVLIAAYII) traverse the membrane as a helical segment. Residues histidine 278 and aspartate 282 each coordinate Zn(2+). Residues 297 to 311 (RFKPEYKIADPICTY) are Lumenal-facing. A helical membrane pass occupies residues 312–332 (IFSLLVAFTTFRIIWDTVVII). At 333-430 (LEGVPSHLNV…TCANCHSSST (98 aa)) the chain is on the cytoplasmic side.

Belongs to the cation diffusion facilitator (CDF) transporter (TC 2.A.4) family. SLC30A subfamily. Homodimerization could regulate efficiency for zinc transport. Interacts with TMEM163. As to expression, widely expressed. Highly expressed in the brain and in mammary epithelial cell lines.

The protein resides in the endosome membrane. The protein localises to the late endosome membrane. Its subcellular location is the lysosome membrane. It catalyses the reaction Zn(2+)(in) + 2 H(+)(out) = Zn(2+)(out) + 2 H(+)(in). In terms of biological role, probable proton-coupled zinc ion antiporter mediating zinc import from cytoplasm potentially into the endocytic compartment. Controls zinc deposition in milk. This chain is Probable proton-coupled zinc antiporter SLC30A4, found in Mus musculus (Mouse).